A 334-amino-acid chain; its full sequence is Beta-ketoacyl-[acyl-carrier-protein] synthase III (334 aa).

Catalysis depends on residues Cys114 and His253. The ACP-binding stretch occupies residues 254–258 (QANIR). Asn283 is a catalytic residue.

It belongs to the thiolase-like superfamily. FabH family. As to quaternary structure, homodimer.

It is found in the cytoplasm. It carries out the reaction malonyl-[ACP] + acetyl-CoA + H(+) = 3-oxobutanoyl-[ACP] + CO2 + CoA. It participates in lipid metabolism; fatty acid biosynthesis. Catalyzes the condensation reaction of fatty acid synthesis by the addition to an acyl acceptor of two carbons from malonyl-ACP. Catalyzes the first condensation reaction which initiates fatty acid synthesis and may therefore play a role in governing the total rate of fatty acid production. Possesses both acetoacetyl-ACP synthase and acetyl transacylase activities. Its substrate specificity determines the biosynthesis of branched-chain and/or straight-chain of fatty acids. The protein is Beta-ketoacyl-[acyl-carrier-protein] synthase III of Campylobacter curvus (strain 525.92).